The chain runs to 172 residues: uncharacterized protein (172 aa).

This is an uncharacterized protein from Haemophilus influenzae (strain ATCC 51907 / DSM 11121 / KW20 / Rd).